A 220-amino-acid polypeptide reads, in one-letter code: NAD(P)H-quinone oxidoreductase subunit M, chloroplastic (220 aa).

The transit peptide at 1 to 37 (MATTASPFLSPAKLSLERRLPRATWTARRSVRFPPVR) directs the protein to the chloroplast. Residues 20–91 (LPRATWTARR…PVQPLAESKN (72 aa)) form a disordered region. A compositionally biased stretch (low complexity) spans 34–44 (PPVRAQDQQQQ).

This sequence belongs to the NDH complex subunit M family. As to quaternary structure, part of the chloroplast NDH complex, composed of a mixture of chloroplast and nucleus encoded subunits. Component of the NDH subcomplex A, at least composed of ndhH, ndhI, ndhJ, ndhK, ndhL, ndhM, ndhN and ndhO.

Its subcellular location is the plastid. The protein localises to the chloroplast thylakoid membrane. It carries out the reaction a plastoquinone + NADH + (n+1) H(+)(in) = a plastoquinol + NAD(+) + n H(+)(out). The catalysed reaction is a plastoquinone + NADPH + (n+1) H(+)(in) = a plastoquinol + NADP(+) + n H(+)(out). In terms of biological role, NDH shuttles electrons from NAD(P)H:plastoquinone, via FMN and iron-sulfur (Fe-S) centers, to quinones in the photosynthetic chain and possibly in a chloroplast respiratory chain. The immediate electron acceptor for the enzyme in this species is believed to be plastoquinone. Couples the redox reaction to proton translocation, and thus conserves the redox energy in a proton gradient. This Oryza sativa subsp. indica (Rice) protein is NAD(P)H-quinone oxidoreductase subunit M, chloroplastic.